The primary structure comprises 545 residues: Glucose-6-phosphate isomerase (545 aa).

The active-site Proton donor is the Glu-345. Active-site residues include His-376 and Lys-514.

It belongs to the GPI family.

It localises to the cytoplasm. It carries out the reaction alpha-D-glucose 6-phosphate = beta-D-fructose 6-phosphate. It participates in carbohydrate biosynthesis; gluconeogenesis. The protein operates within carbohydrate degradation; glycolysis; D-glyceraldehyde 3-phosphate and glycerone phosphate from D-glucose: step 2/4. Catalyzes the reversible isomerization of glucose-6-phosphate to fructose-6-phosphate. The polypeptide is Glucose-6-phosphate isomerase (Leptothrix cholodnii (strain ATCC 51168 / LMG 8142 / SP-6) (Leptothrix discophora (strain SP-6))).